A 127-amino-acid chain; its full sequence is DNA-directed RNA polymerase subunit omega (127 aa).

The protein belongs to the RNA polymerase subunit omega family. As to quaternary structure, the RNAP catalytic core consists of 2 alpha, 1 beta, 1 beta' and 1 omega subunit. When a sigma factor is associated with the core the holoenzyme is formed, which can initiate transcription.

The enzyme catalyses RNA(n) + a ribonucleoside 5'-triphosphate = RNA(n+1) + diphosphate. Functionally, promotes RNA polymerase assembly. Latches the N- and C-terminal regions of the beta' subunit thereby facilitating its interaction with the beta and alpha subunits. The polypeptide is DNA-directed RNA polymerase subunit omega (Rickettsia africae (strain ESF-5)).